The primary structure comprises 259 residues: Phosphatidylglycerol--prolipoprotein diacylglyceryl transferase (259 aa).

4 consecutive transmembrane segments (helical) span residues 12 to 32 (LAIH…VYLA), 41 to 61 (ISSD…IVGA), 80 to 100 (IIAI…GALV), and 109 to 129 (VLNP…AQAI). Arg-131 is an a 1,2-diacyl-sn-glycero-3-phospho-(1'-sn-glycerol) binding site. 3 helical membrane-spanning segments follow: residues 167–187 (IPTF…IMMW), 194–214 (LLDG…RLVI), and 226–246 (GIRI…IFVI).

This sequence belongs to the Lgt family.

The protein resides in the cell membrane. The enzyme catalyses L-cysteinyl-[prolipoprotein] + a 1,2-diacyl-sn-glycero-3-phospho-(1'-sn-glycerol) = an S-1,2-diacyl-sn-glyceryl-L-cysteinyl-[prolipoprotein] + sn-glycerol 1-phosphate + H(+). Its pathway is protein modification; lipoprotein biosynthesis (diacylglyceryl transfer). Its function is as follows. Catalyzes the transfer of the diacylglyceryl group from phosphatidylglycerol to the sulfhydryl group of the N-terminal cysteine of a prolipoprotein, the first step in the formation of mature lipoproteins. This chain is Phosphatidylglycerol--prolipoprotein diacylglyceryl transferase, found in Streptococcus pyogenes serotype M49 (strain NZ131).